A 264-amino-acid chain; its full sequence is MSDKQFIETQGQRLYEALRSARTLAPLTDNHPEMTVEDAYHISLHMLRLREASGERVIGKKIGVTSKPVQDMLNVHQPDFGFLTDSMEYEDGAAVSLKAAGLIQPRAEGEIAFMLKKDLQGPGVTREDVLAATEWVAPCFEIVDSRINDWKIKIQDTVADNASCGVFVIGKQHTDPASLDLAAAAMQMSKNGQPAGSGLGSAVQGHPAEAVAWLANTLGAFGIPFKAGEVILSGSLAPLVPAAAGDRFDMVIEGMGTCSIQFTE.

Belongs to the hydratase/decarboxylase family.

The enzyme catalyses (2Z,4Z)-2-hydroxyhexa-2,4-dienoate + H2O = 4-hydroxy-2-oxohexanoate. Its function is as follows. Involved in the catatabolism of testosterone. Catalyzes the hydration of 2-hydroxyhexa-2,4-dienoic acid to 4-hydroxy-2-oxohexanoic acid. This chain is 2-hydroxyhexa-2,4-dienoate hydratase (tesE), found in Comamonas testosteroni (Pseudomonas testosteroni).